A 1407-amino-acid polypeptide reads, in one-letter code: DNA-directed RNA polymerase subunit beta' (1407 aa).

Zn(2+) contacts are provided by cysteine 70, cysteine 72, cysteine 85, and cysteine 88. Mg(2+) contacts are provided by aspartate 460, aspartate 462, and aspartate 464. Residues cysteine 814, cysteine 888, cysteine 895, and cysteine 898 each coordinate Zn(2+).

Belongs to the RNA polymerase beta' chain family. As to quaternary structure, the RNAP catalytic core consists of 2 alpha, 1 beta, 1 beta' and 1 omega subunit. When a sigma factor is associated with the core the holoenzyme is formed, which can initiate transcription. It depends on Mg(2+) as a cofactor. The cofactor is Zn(2+).

It carries out the reaction RNA(n) + a ribonucleoside 5'-triphosphate = RNA(n+1) + diphosphate. DNA-dependent RNA polymerase catalyzes the transcription of DNA into RNA using the four ribonucleoside triphosphates as substrates. This Salmonella paratyphi A (strain ATCC 9150 / SARB42) protein is DNA-directed RNA polymerase subunit beta'.